A 68-amino-acid chain; its full sequence is Large ribosomal subunit protein uL29 (68 aa).

This sequence belongs to the universal ribosomal protein uL29 family.

The protein is Large ribosomal subunit protein uL29 of Picosynechococcus sp. (strain ATCC 27264 / PCC 7002 / PR-6) (Agmenellum quadruplicatum).